Reading from the N-terminus, the 93-residue chain is Pyrimidine/purine nucleoside phosphorylase (93 aa).

This sequence belongs to the nucleoside phosphorylase PpnP family.

The catalysed reaction is a purine D-ribonucleoside + phosphate = a purine nucleobase + alpha-D-ribose 1-phosphate. It carries out the reaction adenosine + phosphate = alpha-D-ribose 1-phosphate + adenine. It catalyses the reaction cytidine + phosphate = cytosine + alpha-D-ribose 1-phosphate. The enzyme catalyses guanosine + phosphate = alpha-D-ribose 1-phosphate + guanine. The catalysed reaction is inosine + phosphate = alpha-D-ribose 1-phosphate + hypoxanthine. It carries out the reaction thymidine + phosphate = 2-deoxy-alpha-D-ribose 1-phosphate + thymine. It catalyses the reaction uridine + phosphate = alpha-D-ribose 1-phosphate + uracil. The enzyme catalyses xanthosine + phosphate = alpha-D-ribose 1-phosphate + xanthine. In terms of biological role, catalyzes the phosphorolysis of diverse nucleosides, yielding D-ribose 1-phosphate and the respective free bases. Can use uridine, adenosine, guanosine, cytidine, thymidine, inosine and xanthosine as substrates. Also catalyzes the reverse reactions. The sequence is that of Pyrimidine/purine nucleoside phosphorylase from Sorangium cellulosum (strain So ce56) (Polyangium cellulosum (strain So ce56)).